Here is a 427-residue protein sequence, read N- to C-terminus: Serine--tRNA ligase (427 aa).

L-serine is bound at residue 228–230; that stretch reads TSE. ATP is bound at residue 259 to 261; sequence RSE. An L-serine-binding site is contributed by Glu-282. 346–349 contributes to the ATP binding site; it reads EISS. Ser-384 lines the L-serine pocket.

This sequence belongs to the class-II aminoacyl-tRNA synthetase family. Type-1 seryl-tRNA synthetase subfamily. Homodimer. The tRNA molecule binds across the dimer.

Its subcellular location is the cytoplasm. The enzyme catalyses tRNA(Ser) + L-serine + ATP = L-seryl-tRNA(Ser) + AMP + diphosphate + H(+). It carries out the reaction tRNA(Sec) + L-serine + ATP = L-seryl-tRNA(Sec) + AMP + diphosphate + H(+). Its pathway is aminoacyl-tRNA biosynthesis; selenocysteinyl-tRNA(Sec) biosynthesis; L-seryl-tRNA(Sec) from L-serine and tRNA(Sec): step 1/1. Its function is as follows. Catalyzes the attachment of serine to tRNA(Ser). Is also able to aminoacylate tRNA(Sec) with serine, to form the misacylated tRNA L-seryl-tRNA(Sec), which will be further converted into selenocysteinyl-tRNA(Sec). The polypeptide is Serine--tRNA ligase (Ehrlichia ruminantium (strain Welgevonden)).